A 196-amino-acid polypeptide reads, in one-letter code: Pyridoxal 5'-phosphate synthase subunit PdxT (196 aa).

52–54 (GES) serves as a coordination point for L-glutamine. C84 (nucleophile) is an active-site residue. L-glutamine contacts are provided by residues R113 and 141–142 (IR). Residues H178 and E180 each act as charge relay system in the active site.

It belongs to the glutaminase PdxT/SNO family. In terms of assembly, in the presence of PdxS, forms a dodecamer of heterodimers. Only shows activity in the heterodimer.

The enzyme catalyses aldehydo-D-ribose 5-phosphate + D-glyceraldehyde 3-phosphate + L-glutamine = pyridoxal 5'-phosphate + L-glutamate + phosphate + 3 H2O + H(+). It catalyses the reaction L-glutamine + H2O = L-glutamate + NH4(+). It functions in the pathway cofactor biosynthesis; pyridoxal 5'-phosphate biosynthesis. Its function is as follows. Catalyzes the hydrolysis of glutamine to glutamate and ammonia as part of the biosynthesis of pyridoxal 5'-phosphate. The resulting ammonia molecule is channeled to the active site of PdxS. The protein is Pyridoxal 5'-phosphate synthase subunit PdxT of Pyrococcus abyssi (strain GE5 / Orsay).